We begin with the raw amino-acid sequence, 212 residues long: Ras-related protein Rab-43 (212 aa).

Gly-25–Thr-32 contributes to the GTP binding site. The Effector region signature appears at Gln-47–Phe-55. Ser-49 is subject to Phosphoserine. Asp-73 to Gln-77 contacts GTP. The residue at position 82 (Thr-82) is a Phosphothreonine; by LRRK2. GTP is bound by residues Asn-131–Asp-134 and Ala-163–Lys-164. Ser-193 is subject to Phosphoserine. S-geranylgeranyl cysteine attachment occurs at residues Cys-210 and Cys-212. Cys-212 is modified (cysteine methyl ester).

It belongs to the small GTPase superfamily. Rab family. As to quaternary structure, interacts with GDI1, GDI2, CHM and CHML; phosphorylation at Thr-82 disrupts these interactions. As to expression, widely expressed in brain, testis, lung, heart, ovary, colon, kidney, uterus and spleen but not in liver.

The protein resides in the cytoplasmic vesicle. The protein localises to the phagosome. It is found in the phagosome membrane. Its subcellular location is the golgi apparatus. It localises to the trans-Golgi network membrane. The protein resides in the trans-Golgi network. Functionally, the small GTPases Rab are key regulators of intracellular membrane trafficking, from the formation of transport vesicles to their fusion with membranes. Rabs cycle between an inactive GDP-bound form and an active GTP-bound form that is able to recruit to membranes different set of downstream effectors directly responsible for vesicle formation, movement, tethering and fusion. The low intrinsic GTPase activity of RAB43 is activated by USP6NL. Involved in retrograde transport from the endocytic pathway to the Golgi apparatus. Involved in the transport of Shiga toxin from early and recycling endosomes to the trans-Golgi network. Required for the structural integrity of the Golgi complex. Plays a role in the maturation of phagosomes that engulf pathogens, such as S.aureus and M.tuberculosis. The sequence is that of Ras-related protein Rab-43 (RAB43) from Homo sapiens (Human).